Consider the following 624-residue polypeptide: Aeromonas extracellular serine protease (624 aa).

Residues 1–24 (MKQTSLALAITALLSTLPSALVQA) form the signal peptide. Cysteines 28 and 48 form a disulfide. Asparagine 53 serves as a coordination point for Ca(2+). The Peptidase S8 domain maps to 59–421 (QWYLLNSGQD…GKVRDVKGLE (363 aa)). The Charge relay system role is filled by aspartate 102. A Ca(2+)-binding site is contributed by aspartate 111. Residues 116 to 140 (VRPGSKNVVTGSDDPTPTDPDTAHG) are disordered. Histidine 139 functions as the Charge relay system in the catalytic mechanism. Ca(2+)-binding residues include valine 150, asparagine 152, isoleucine 154, threonine 156, aspartate 321, leucine 322, glycine 324, methionine 327, asparagine 330, and cysteine 350. Cysteine 325 and cysteine 350 are joined by a disulfide. Residue serine 360 is the Charge relay system of the active site. In terms of domain architecture, P/Homo B spans 456-622 (LPPLVQLPWQ…SLRVLGHDAN (167 aa)). Residues aspartate 478, aspartate 512, aspartate 577, alanine 579, asparagine 602, and asparagine 603 each contribute to the Ca(2+) site.

It belongs to the peptidase S8 family. Furin subfamily. In terms of assembly, forms a complex with the chaperone ORF2 in the periplasm. After translocation of the ASP-ORF2 complex from the periplasm to the extracellular space, the complex is dissociated in a pH-dependent manner. Requires Ca(2+) as cofactor.

It localises to the periplasm. The protein localises to the secreted. The catalysed reaction is Cleavage of -Lys-Lys-|-Xaa and -Lys-Arg-|-Xaa bonds.. Its activity is regulated as follows. Folding, maturation and production of the active form of the protease by the cell requires a protein (ORF2), encoded just downstream of asp, which acts as a chaperone. Formation of a complex with ORF2 in the periplasm also inactivates the protease activity and likely protects ASP from intrinsic proteases. In vitro, protease activity is inhibited by human alpha-2-macroglobulin, suggesting that this inhibitor can impede ASP virulence activities in A.sobria infection sites. However, slow ASP inhibition by alpha-2-macroglobulin in plasma may indicate insufficient ASP control in vivo. Activity is inhibited by serine protease inhibitors such as 4-(2-aminoethyl)-benzenesulfonyl fluoride (AEBSF) and diisopropyl fluorophosphate (DFP). Not inhibited by metallo-protease inhibitors and cysteine protease inhibitors. The treatment with reagents to modify sulfhydryl group do not reduce the activity. Functionally, exhibits serine protease activity. Preferentially cleaves the peptide bond following two basic residues, one of which is Lys, but does not recognize the bond following a single basic residue. Probable potent virulence factor that cleaves various host plasma proteins, including prekallikrein, prothrombin and fibrinogen. ASP induces vascular leakage and reduction in blood pressure by activating the host plasma kallikrein/kinin system. It affects the host coagulation system during infection through activation of prothrombin to alpha-thrombin and degradation of fibrinogen, which impairs plasma clottability. It also hydrolyzes the complement component C5, releasing the C5a anaphylatoxin, which causes the formation of pus and edema. In addition, degrades its external chaperone ORF2 after the secretion of the ASP-ORF2 complex. This Aeromonas sobria protein is Aeromonas extracellular serine protease.